Consider the following 497-residue polypeptide: Guanosine-5'-triphosphate,3'-diphosphate pyrophosphatase (497 aa).

It belongs to the GppA/Ppx family. GppA subfamily.

It carries out the reaction guanosine 3'-diphosphate 5'-triphosphate + H2O = guanosine 3',5'-bis(diphosphate) + phosphate + H(+). Its pathway is purine metabolism; ppGpp biosynthesis; ppGpp from GTP: step 2/2. Catalyzes the conversion of pppGpp to ppGpp. Guanosine pentaphosphate (pppGpp) is a cytoplasmic signaling molecule which together with ppGpp controls the 'stringent response', an adaptive process that allows bacteria to respond to amino acid starvation, resulting in the coordinated regulation of numerous cellular activities. This is Guanosine-5'-triphosphate,3'-diphosphate pyrophosphatase from Vibrio atlanticus (strain LGP32) (Vibrio splendidus (strain Mel32)).